The sequence spans 78 residues: Structural DNA-binding protein p10 (78 aa).

Residues 1–24 (MPTKAGTKSTANKKTTKGSSKSGS) are compositionally biased toward low complexity. The segment at 1-41 (MPTKAGTKSTANKKTTKGSSKSGSPRGHTGKTHAPPSMHSG) is disordered.

The protein belongs to the asfivirus P10 family.

Its subcellular location is the virion. In terms of biological role, may play a role in genome packaging through direct interaction with viral DNA. Binds to ssDNA and dsDNA with the same apparent affinity in vitro. This African swine fever virus (isolate Tick/South Africa/Pretoriuskop Pr4/1996) (ASFV) protein is Structural DNA-binding protein p10.